Consider the following 238-residue polypeptide: Purine nucleoside phosphorylase DeoD-type (238 aa).

Position 4 (His4) interacts with a purine D-ribonucleoside. Residues Gly20, Arg24, Arg43, and 87 to 90 (RIGS) each bind phosphate. A purine D-ribonucleoside is bound by residues 181 to 183 (EME) and 205 to 206 (SD). Residue Asp206 is the Proton donor of the active site.

Belongs to the PNP/UDP phosphorylase family. In terms of assembly, homohexamer; trimer of homodimers.

It catalyses the reaction a purine D-ribonucleoside + phosphate = a purine nucleobase + alpha-D-ribose 1-phosphate. It carries out the reaction a purine 2'-deoxy-D-ribonucleoside + phosphate = a purine nucleobase + 2-deoxy-alpha-D-ribose 1-phosphate. Functionally, catalyzes the reversible phosphorolytic breakdown of the N-glycosidic bond in the beta-(deoxy)ribonucleoside molecules, with the formation of the corresponding free purine bases and pentose-1-phosphate. The sequence is that of Purine nucleoside phosphorylase DeoD-type from Mycoplasma genitalium (strain ATCC 33530 / DSM 19775 / NCTC 10195 / G37) (Mycoplasmoides genitalium).